The sequence spans 303 residues: Esterase (303 aa).

The short motif at H79 to G81 is the Involved in the stabilization of the negatively charged intermediate by the formation of the oxyanion hole element. Residues S149 and E244 contribute to the active site.

The protein belongs to the 'GDXG' lipolytic enzyme family.

Its subcellular location is the secreted. In Acinetobacter venetianus (strain ATCC 31012 / DSM 23050 / BCRC 14357 / CCUG 45561 / CIP 110063 / KCTC 2702 / LMG 19082 / RAG-1), this protein is Esterase (est).